Reading from the N-terminus, the 924-residue chain is MYQYAPSHNLDHIEWNHAHLIYPPNLAIPTSPVNPPATQLNQPVQMTIDFDSIIEPKLGARESISWNRNGIIASIGDEGVETNLLVCTDGQDWVLTKPTLYAPKSILQPPTTSFVTPHRAFCHVEWSPSGSDLAIIDTLGSLYIYSQYTTLSPITCLRKPPSEELTTPIDLNAIVGFTWVAPEKPVILTNPGLKAGGNEKSKQKLSDVKDFPTGQTSQLLGYSGISVTYGVSQGLHLGPRIPQGFGACIGVTRSQVLKLWTQNGPSQPYNLVKLSLNQLHSDDIISHASFAGTKDHKMLLACYSPAGAIYLYRIEVEWSKEEEPKLRATRLLKETLMPQSGAPARLTDLKLFSIRSNQVSSETEAEMVCVFTDTKGATTNRYELQSHTPDLNSTFYSLGTNDSSASSTTTHKTHIISLVETTTSNKIVNIGSQVYDSIFFAAHEDGILNFRYRGNVSSSTKGTPFNMFSDAGYAFTPLPKGSDRPDYICVSPTCASYVYKTKDGLKLRIIDNKIPDADLTVAQMVDSAFVLSLRHSVSCISAVCNDDVMMVMRREIQRVSKLAPALETQFPLLLLAESHKAINFSLDLKKDHQMDKIMINPSLQRLLTMQTVIGTQHGWTRNVTSRLSWCFLNLRLVSFSLTFTLRAIGQQKPGVAPNHAMRIHYLMSLSGLKRWCLDFAAYLCQELLAASNEGPSYFQKQHVALPMVMARSSRMLLMYSWRGIRSLDTILMQKPGTETQEAGLASQRQRELSHFTPISMTFFEQLFNVIDSHTKQVAENVEDRLGLEQQLLFQGMIPQQFLPLAKRCVDEFDKFRKTNDLSPLYFYNVSWLGLDEHYDGRPAPTPAMAPYRNVTSTGLKIDCLRKFIIERQEGSILRVCQRCAGTSVFVDSSDGKQFTGTHWTFAFQRNCWCGGMWIPESLGV.

This sequence belongs to the Mediator complex subunit 16 family. As to quaternary structure, component of the Mediator complex.

The protein localises to the nucleus. Functionally, component of the Mediator complex, a coactivator involved in the regulated transcription of nearly all RNA polymerase II-dependent genes. Mediator functions as a bridge to convey information from gene-specific regulatory proteins to the basal RNA polymerase II transcription machinery. Mediator is recruited to promoters by direct interactions with regulatory proteins and serves as a scaffold for the assembly of a functional preinitiation complex with RNA polymerase II and the general transcription factors. The protein is Mediator of RNA polymerase II transcription subunit 16 (SIN4) of Yarrowia lipolytica (strain CLIB 122 / E 150) (Yeast).